Reading from the N-terminus, the 72-residue chain is Translation initiation factor IF-1 (72 aa).

The S1-like domain occupies 1–72; it reads MAKEEAITVD…SKGRITYRKK (72 aa).

It belongs to the IF-1 family. In terms of assembly, component of the 30S ribosomal translation pre-initiation complex which assembles on the 30S ribosome in the order IF-2 and IF-3, IF-1 and N-formylmethionyl-tRNA(fMet); mRNA recruitment can occur at any time during PIC assembly.

Its subcellular location is the cytoplasm. In terms of biological role, one of the essential components for the initiation of protein synthesis. Stabilizes the binding of IF-2 and IF-3 on the 30S subunit to which N-formylmethionyl-tRNA(fMet) subsequently binds. Helps modulate mRNA selection, yielding the 30S pre-initiation complex (PIC). Upon addition of the 50S ribosomal subunit IF-1, IF-2 and IF-3 are released leaving the mature 70S translation initiation complex. The polypeptide is Translation initiation factor IF-1 (Leptospira borgpetersenii serovar Hardjo-bovis (strain L550)).